The chain runs to 334 residues: GTP 3',8-cyclase (334 aa).

The Radical SAM core domain occupies 11-236 (GFNRKIDYLR…ESTESSQGPA (226 aa)). Arg20 lines the GTP pocket. [4Fe-4S] cluster is bound by residues Cys27 and Cys31. Residue Tyr33 participates in S-adenosyl-L-methionine binding. Cys34 contributes to the [4Fe-4S] cluster binding site. Residue Arg69 coordinates GTP. Position 73 (Gly73) interacts with S-adenosyl-L-methionine. Residue Thr100 coordinates GTP. Ser124 is a binding site for S-adenosyl-L-methionine. Lys161 contributes to the GTP binding site. Residue Met195 participates in S-adenosyl-L-methionine binding. [4Fe-4S] cluster contacts are provided by Cys260 and Cys263. 265 to 267 (RVR) serves as a coordination point for GTP. Cys277 serves as a coordination point for [4Fe-4S] cluster.

It belongs to the radical SAM superfamily. MoaA family. As to quaternary structure, monomer and homodimer. [4Fe-4S] cluster serves as cofactor.

It catalyses the reaction GTP + AH2 + S-adenosyl-L-methionine = (8S)-3',8-cyclo-7,8-dihydroguanosine 5'-triphosphate + 5'-deoxyadenosine + L-methionine + A + H(+). The protein operates within cofactor biosynthesis; molybdopterin biosynthesis. Catalyzes the cyclization of GTP to (8S)-3',8-cyclo-7,8-dihydroguanosine 5'-triphosphate. The polypeptide is GTP 3',8-cyclase (Pseudomonas putida (strain W619)).